A 172-amino-acid polypeptide reads, in one-letter code: Myosin regulatory light chain (172 aa).

Thr-17 bears the Phosphothreonine mark. Position 18 is a phosphoserine (Ser-18). EF-hand domains follow at residues 27–62 (AQIQ…LGKE), 98–133 (DPEE…MGER), and 134–168 (YSEE…GTKD). Ca(2+) is bound by residues Asp-40, Asn-42, Asp-44, and Asp-51.

As to quaternary structure, myosin is a hexamer of 2 heavy chains and 4 light chains (two regulatory light chains and two essential light chains). Post-translationally, may be phosphorylated by let-502 or/and pak-1 and dephosphorylated by mel-11 to regulate its activation and myosin II-mediated contraction. In terms of tissue distribution, expressed in the spermathecal and uterine walls. Weak expression in gonadal sheath and intestinal muscle. Not detected in vulval, pharyngeal or body wall muscles.

The protein localises to the cytoplasm. It is found in the cytoskeleton. Functionally, regulates myosin II activity and organization during embryo elongation. May be involved in the organization of mlc-5 into bundles. Required maternally for cytokinesis during meiosis and mitosis in the early embryo and for the establishment of embryonic anterior-posterior polarity. The chain is Myosin regulatory light chain from Caenorhabditis elegans.